A 459-amino-acid polypeptide reads, in one-letter code: Vanillin aminotransferase (459 aa).

Pyridoxal 5'-phosphate contacts are provided by residues 115–116 (GS) and aspartate 255. Lysine 284 is modified (N6-(pyridoxal phosphate)lysine). Residue 320–321 (FT) coordinates pyridoxal 5'-phosphate. The stretch at 428–459 (LSLEELDELIRIYGKALKDTEKRVEELKSQKK) forms a coiled coil.

Belongs to the class-III pyridoxal-phosphate-dependent aminotransferase family. In terms of tissue distribution, expressed in placental tissue of immature fruit.

The catalysed reaction is vanillin + L-alanine = vanillylamine + pyruvate. Its pathway is aromatic compound metabolism; phenylpropanoid biosynthesis. In terms of biological role, involved in the biosynthesis of capsaicinoids natural products, pungent alkaloids synthesized from phenylpropanoid intermediates in the placental tissue of chili pepper fruit acting as repellant on herbivorous mammals and conferring spiciness to hot peppers. Can transfer an amine from vanillylamine to pyruvate forming vanillin and L-alanine. Can use pyruvate or oxaloacetate, but not 2-oxoglutarate as amino group acceptors. Is able to convert (S)-1-phenylethylamine into acetophenone in vitro. The sequence is that of Vanillin aminotransferase from Capsicum chinense (Scotch bonnet).